A 342-amino-acid polypeptide reads, in one-letter code: Ubiquitin fusion degradation protein 1 homolog (342 aa).

Disordered stretches follow at residues 245–276 and 318–342; these read FGGA…SNAA and EKEA…RGAR. Positions 259-275 are enriched in polar residues; sequence SSSVSLSDGTGVSTSNA.

The protein belongs to the UFD1 family. As to quaternary structure, forms a complex composed of ubxn-3, ufd-1, npl-4.1 and cdc-48.1; within the complex interacts with cdc-48.1. Interacts with cdc-48.2. Interacts with npl-4.1 and/or npl-4.2.

It is found in the cytoplasm. Its subcellular location is the nucleus. Functions at a post-ubiquitination step in the ubiquitin fusion degradation (UFD) pathway. In association with npl-4.1 and/or npl-4.2 and ATPase cdc-48.1 and/or cdc-48.2, involved in the cytoplasmic elimination of misfolded proteins exported from the ER. This pathway, known as ERAD, prevents the activation of the unfolded protein response (UPR) caused by the accumulation of misfolded proteins in the ER. During S phase and in association with npl-4.1 and/or npl-4.2, cdc-48.1 and/or cdc-48.2 and ubxn-3, ensures the degradation of DNA licensing factor cdt-1 after the initiation of DNA replication and thus the disassembly of the DNA replication CMG helicase complex by promoting the dissociation from chromatin of several of its components including cdc-45 and sld-5. Regulates ubxn-3 nuclear localization during S phase. This chain is Ubiquitin fusion degradation protein 1 homolog (ufd-1), found in Caenorhabditis elegans.